Here is a 296-residue protein sequence, read N- to C-terminus: MQFEKVTYIAVPQKYGQKKVGVEEGPKFLEKLGFMNVLEQVAKSVNKKTITEPKTPQELGVTNARNLNEVESVNIELRDTIAKEYDVNNLLINIGGDHSIGLGTIAGVVKAMKPNARVGVVWFDAHPDMNTPENSPSGNIHGMPLACAVGLGPQRLTSIMPHYITPKDIMYVGIRSIDVGEQFEIQDKHIDHFTAEDVKRVGMKEVIEAINKKFVDYDVIHLSFDIDGIDPEFILGTGTPVPKGISLEDSLYFMSEMGKMKKLHSVDIVEYNPKIEEEITGKNVLKCISSLFGIKC.

Positions 98, 124, 126, and 128 each coordinate Mn(2+). 3 residues coordinate L-arginine: asparagine 130, serine 137, and aspartate 178. The Mn(2+) site is built by aspartate 225 and aspartate 227. The L-arginine site is built by aspartate 227 and threonine 239.

This sequence belongs to the arginase family. Monomer. Homodimer; dimerization is dispensable for catalytic activity. The cofactor is Mn(2+).

The catalysed reaction is L-arginine + H2O = urea + L-ornithine. It functions in the pathway nitrogen metabolism; urea cycle; L-ornithine and urea from L-arginine: step 1/1. Substitution of the loosely bound surface exposed Mn(2+) with Mg(2+), Zn(2+), Ni(2+) or Co(2+) results in similar catalytic activity, substitution with Cd(2+) and Cu(2+) reduces catalytic activity and substitution with Hg(2+) and Ca(2+) inhibits the enzyme. Inhibited by L-norvaline. Functionally, catalyzes the hydrolysis of L-arginine into urea and L-ornithine, which is a precursor for polyamine biosynthesis. By depleting host L-arginine, a substrate for nitric oxide synthase (NOS), prevents the production of nitric oxide (NO) by host activated macrophages, and thus allows the parasite to evade host immune response. The polypeptide is Arginase (Entamoeba histolytica (strain ATCC 30459 / HM-1:IMSS / ABRM)).